We begin with the raw amino-acid sequence, 61 residues long: Small ribosomal subunit protein uS14 (61 aa).

Zn(2+) contacts are provided by Cys-24, Cys-27, Cys-40, and Cys-43.

Belongs to the universal ribosomal protein uS14 family. Zinc-binding uS14 subfamily. In terms of assembly, part of the 30S ribosomal subunit. Contacts proteins S3 and S10. Zn(2+) is required as a cofactor.

In terms of biological role, binds 16S rRNA, required for the assembly of 30S particles and may also be responsible for determining the conformation of the 16S rRNA at the A site. In Rhodococcus erythropolis (strain PR4 / NBRC 100887), this protein is Small ribosomal subunit protein uS14.